Consider the following 135-residue polypeptide: Large ribosomal subunit protein mL41B (135 aa).

Residues 1–13 (MGLITKIARGLVR) constitute a mitochondrion transit peptide.

It belongs to the mitochondrion-specific ribosomal protein mL41 family. In terms of assembly, component of the mitochondrial ribosome large subunit (39S) which comprises a 16S rRNA and about 50 distinct proteins.

It localises to the mitochondrion. Functionally, component of the mitochondrial ribosome large subunit. Also involved in apoptosis and cell cycle. The chain is Large ribosomal subunit protein mL41B (mrpl41-b) from Xenopus laevis (African clawed frog).